We begin with the raw amino-acid sequence, 574 residues long: Fusion glycoprotein F0 (574 aa).

Residues 1–25 form the signal peptide; that stretch reads MELLILKANAITTILTAVTFCFASG. Over 26 to 524 the chain is Extracellular; that stretch reads QNITEEFYQS…NVNAGKSTTN (499 aa). Asparagine 27 and asparagine 70 each carry an N-linked (GlcNAc...) asparagine; by host glycan. 7 disulfides stabilise this stretch: cysteine 37-cysteine 439, cysteine 69-cysteine 212, cysteine 313-cysteine 343, cysteine 322-cysteine 333, cysteine 358-cysteine 367, cysteine 382-cysteine 393, and cysteine 416-cysteine 422. A coiled-coil region spans residues 76–96; it reads VKLIKQELDKYKNAVTELQLL. Asparagine 116, asparagine 120, and asparagine 126 each carry an N-linked (GlcNAc...) asparagine; by host glycan. The interval 137–157 is fusion peptide; that stretch reads FLGFLLGVGSAIASGVAVSKV. Positions 158 to 209 form a coiled coil; it reads LHLEGEVNKIKSALLSTNKAVVSLSNGVSVLTSKVLDLKNYIDKQLLPIVNK. A coiled-coil region spans residues 481–516; the sequence is LVFPSDEFDASISQVNEKINQSLAFIRKSDELLHNV. The N-linked (GlcNAc...) asparagine; by host glycan is linked to asparagine 500. The chain crosses the membrane as a helical span at residues 525–550; that stretch reads IMITTIIIVIIVILLSLIAVGLLLYC. A lipid anchor (S-palmitoyl cysteine; by host) is attached at cysteine 550. Residues 551 to 574 lie on the Cytoplasmic side of the membrane; the sequence is KARSTPVTLSKDQLSGINNIAFSN.

The protein belongs to the paramyxoviruses fusion glycoprotein family. As to quaternary structure, homotrimer. Heterodimer with fusion protein F2; disulfide-linked. Interacts with host NCL; this interaction plays a role in viral entry into the host cell. As a heterodimer with F2, interacts with host heparan sulfate. As a heterodimer with F2, interacts with host IGF1R; this interaction activates PRKCZ/PKCzeta that recruits NCL/nucleolin from the host nucleus to the plasma membrane. Part of a complex composed of F1, F2 and G glycoproteins. As a heterodimer with F2, interacts with host RHOA; this interaction facilitates virus-induced syncytium formation. Homotrimer. Heterodimer with fusion protein F1; disulfide-linked. As a heterodimer with F1, interacts with host heparan sulfate. As a heterodimer with F1, interacts with host IGF1R; this interaction activates PRKCZ/PKCzeta that recruits NCL/nucleolin from the host nucleus to the plasma membrane. Part of a complex composed of F1, F2 and G glycoproteins. As a heterodimer with F1, interacts with host RHOA; this interaction facilitates virus-induced syncytium formation. Post-translationally, the F glycoprotein is synthesized as a F0 inactive precursor that is heavily N-glycosylated and processed at two sites by a host furin-like protease probably in the Golgi. The cleavage site between p27 and F1 may occur after endocytosis to yield the mature F1 and F2 proteins. Both cleavages are required for membrane fusion and p27 is released from the processed protein.

The protein localises to the host Golgi apparatus membrane. It localises to the virion membrane. Its subcellular location is the host cell membrane. In terms of biological role, inactive precursor that is cleaved at two sites by a furin-like protease to give rise to the mature F1 and F2 fusion glycoproteins. Class I viral fusion protein. Under the current model, the protein has at least 3 conformational states: pre-fusion native state, pre-hairpin intermediate state, and post-fusion hairpin state. During viral and plasma cell membrane fusion, the coiled coil regions assume a trimer-of-hairpins structure, positioning the fusion peptide in close proximity to the C-terminal region of the ectodomain. The formation of this structure appears to drive apposition and subsequent fusion of viral and cellular membranes leading to delivery of the nucleocapsid into the cytoplasm. This fusion is pH independent and occurs at the plasma or endosomal membrane. The trimer of F1-F2 (F protein) also facilitates the attachment to host cell by binding to host heparan sulfate. F protein is involved in the entry into the host cell through the interaction with host IGF1R. This interaction activates PRKCZ/PKCzeta that recruits host NCL/nucleolin to the apical cell surface where it can bind fusion glycoprotein F1. Later in infection, F protein expressed at the plasma membrane of infected cells can mediate fusion with adjacent cells to form syncytia, a cytopathic effect that could lead to tissue necrosis. F protein may trigger p53-dependent apoptosis. Functionally, major determinant of the species specificity of RSV infection. The trimer of F1-F2 (F protein) also facilitates the attachment to host cell by binding to host heparan sulfate. F protein is involved in the entry into the host cell through the interaction with host IGF1R. This interaction activates PRKCZ/PKCzeta that recruits host NCL/nucleolin to the apical cell surface where it can bind fusion glycoprotein F1. Later in infection, F protein expressed at the plasma membrane of infected cells can mediate fusion with adjacent cells to form syncytia, a cytopathic effect that could lead to tissue necrosis. F protein seems to trigger p53-dependent apoptosis. This chain is Fusion glycoprotein F0 (F), found in Human respiratory syncytial virus A (strain A2).